A 131-amino-acid polypeptide reads, in one-letter code: Holo-[acyl-carrier-protein] synthase (131 aa).

2 residues coordinate Mg(2+): D8 and E58.

This sequence belongs to the P-Pant transferase superfamily. AcpS family. Requires Mg(2+) as cofactor.

It is found in the cytoplasm. The enzyme catalyses apo-[ACP] + CoA = holo-[ACP] + adenosine 3',5'-bisphosphate + H(+). In terms of biological role, transfers the 4'-phosphopantetheine moiety from coenzyme A to a Ser of acyl-carrier-protein. This is Holo-[acyl-carrier-protein] synthase from Oenococcus oeni (strain ATCC BAA-331 / PSU-1).